Consider the following 90-residue polypeptide: Acylphosphatase (90 aa).

An Acylphosphatase-like domain is found at 3–90 (AVTLKATGRV…QNYHDFRITN (88 aa)). Residues Arg-18 and Asn-36 contribute to the active site.

This sequence belongs to the acylphosphatase family.

It catalyses the reaction an acyl phosphate + H2O = a carboxylate + phosphate + H(+). This chain is Acylphosphatase (acyP), found in Lactiplantibacillus plantarum (strain ATCC BAA-793 / NCIMB 8826 / WCFS1) (Lactobacillus plantarum).